The chain runs to 269 residues: MNQMNPAFVMPDVQSTVDTRQIPIQRVGVKAVRHPLTVCTESGDVQPTVGVWNLDVRLPADQKGTHMSRFVALLEENRAPLTVERFRAMLASMLEKLEAEAGRIEVTFPYFVNKTAPVSGVQSLLDYEVTLAGESRNGDTRLFLKVLVPVTSLCPCSKKISQYGAHNQRSHVTIDAELAADLPVEALIRIAEEEASCELWGLLKRPDEKFVTERAYENPKFVEDLVRDVAQRLDADERVAAYVLEAENFESIHNHSAYALIERDKRQAA.

Belongs to the GTP cyclohydrolase IV family.

It catalyses the reaction GTP + H2O = 7,8-dihydroneopterin 3'-triphosphate + formate + H(+). Its pathway is cofactor biosynthesis; 7,8-dihydroneopterin triphosphate biosynthesis; 7,8-dihydroneopterin triphosphate from GTP: step 1/1. In terms of biological role, converts GTP to 7,8-dihydroneopterin triphosphate. This chain is GTP cyclohydrolase FolE2 2, found in Burkholderia lata (strain ATCC 17760 / DSM 23089 / LMG 22485 / NCIMB 9086 / R18194 / 383).